Here is a 443-residue protein sequence, read N- to C-terminus: GTPase Der (443 aa).

2 consecutive EngA-type G domains span residues 3–167 and 176–349; these read PTLV…PEPE and VRVA…AAAM. Residues 9 to 16, 56 to 60, 119 to 122, 182 to 189, 229 to 233, and 294 to 297 each bind GTP; these read GRPNVGKS, DTGGF, NKAE, DTAGM, and NKWD. The region spanning 350 to 434 is the KH-like domain; that stretch reads AKMTTPRLTR…PLRIQFVTAK (85 aa).

This sequence belongs to the TRAFAC class TrmE-Era-EngA-EngB-Septin-like GTPase superfamily. EngA (Der) GTPase family. In terms of assembly, associates with the 50S ribosomal subunit.

Its function is as follows. GTPase that plays an essential role in the late steps of ribosome biogenesis. The chain is GTPase Der from Dechloromonas aromatica (strain RCB).